Reading from the N-terminus, the 577-residue chain is Beta-glucosidase 30 (577 aa).

The first 23 residues, 1–23 (MAKGSWFFIILFIISMLENMINS), serve as a signal peptide directing secretion. Residues Gln45, His148, and 193-194 (NE) contribute to the a beta-D-glucoside site. Glu194 (proton donor) is an active-site residue. A disulfide bond links Cys213 and Cys221. Asn328 carries an N-linked (GlcNAc...) asparagine glycan. Tyr338 is an a beta-D-glucoside binding site. Asn368 carries N-linked (GlcNAc...) asparagine glycosylation. A beta-D-glucoside is bound by residues Glu410, Trp460, 467 to 468 (EW), and Phe476. The active-site Nucleophile is Glu410. N-linked (GlcNAc...) asparagine glycans are attached at residues Asn524 and Asn544.

This sequence belongs to the glycosyl hydrolase 1 family.

It carries out the reaction Hydrolysis of terminal, non-reducing beta-D-glucosyl residues with release of beta-D-glucose.. The polypeptide is Beta-glucosidase 30 (Arabidopsis thaliana (Mouse-ear cress)).